The following is a 550-amino-acid chain: CTP synthase (550 aa).

An amidoligase domain region spans residues 1 to 270 (MTKYVFVTGG…DRIICEELKL (270 aa)). Ser-13 contributes to the CTP binding site. Ser-13 is a UTP binding site. Residues 14-19 (SLGKGI) and Asp-71 contribute to the ATP site. Positions 71 and 144 each coordinate Mg(2+). CTP is bound by residues 151-153 (DIE), 191-196 (KTKPTQ), and Lys-227. UTP-binding positions include 191-196 (KTKPTQ) and Lys-227. One can recognise a Glutamine amidotransferase type-1 domain in the interval 295–547 (TIGMVGKYVD…VEAALANKQA (253 aa)). Residue Gly-356 coordinates L-glutamine. Cys-383 acts as the Nucleophile; for glutamine hydrolysis in catalysis. Residues 384-387 (LGMQ), Glu-407, and Arg-473 contribute to the L-glutamine site. Active-site residues include His-520 and Glu-522.

It belongs to the CTP synthase family. Homotetramer.

It catalyses the reaction UTP + L-glutamine + ATP + H2O = CTP + L-glutamate + ADP + phosphate + 2 H(+). The catalysed reaction is L-glutamine + H2O = L-glutamate + NH4(+). It carries out the reaction UTP + NH4(+) + ATP = CTP + ADP + phosphate + 2 H(+). Its pathway is pyrimidine metabolism; CTP biosynthesis via de novo pathway; CTP from UDP: step 2/2. With respect to regulation, allosterically activated by GTP, when glutamine is the substrate; GTP has no effect on the reaction when ammonia is the substrate. The allosteric effector GTP functions by stabilizing the protein conformation that binds the tetrahedral intermediate(s) formed during glutamine hydrolysis. Inhibited by the product CTP, via allosteric rather than competitive inhibition. Functionally, catalyzes the ATP-dependent amination of UTP to CTP with either L-glutamine or ammonia as the source of nitrogen. Regulates intracellular CTP levels through interactions with the four ribonucleotide triphosphates. In Burkholderia lata (strain ATCC 17760 / DSM 23089 / LMG 22485 / NCIMB 9086 / R18194 / 383), this protein is CTP synthase.